Consider the following 1609-residue polypeptide: Probable outer membrane protein pmp21 (1609 aa).

The signal sequence occupies residues 1–30 (MVAKKTVRSYRSSFSHSVIVAILSAGIAFE). The span at 132-145 (FSQPTQEPDTSNAV) shows a compositional bias: polar residues. Disordered regions lie at residues 132 to 183 (FSQP…KSPE) and 640 to 677 (TAPV…EVPP). Composition is skewed to basic and acidic residues over residues 149 to 175 (ISSD…KEVS) and 651 to 672 (NKDE…KTVE). Residues 1328–1609 (ELDFSTNVWG…DFNGGIRIIF (282 aa)) enclose the Autotransporter domain.

It belongs to the PMP outer membrane protein family.

It localises to the secreted. Its subcellular location is the cell wall. The protein resides in the cell outer membrane. The chain is Probable outer membrane protein pmp21 (pmp21) from Chlamydia pneumoniae (Chlamydophila pneumoniae).